A 127-amino-acid chain; its full sequence is Protein ApaG (127 aa).

The 125-residue stretch at 3-127 folds into the ApaG domain; that stretch reads DTNKYRIEVQ…FVLASPRALH (125 aa).

The protein is Protein ApaG of Dechloromonas aromatica (strain RCB).